We begin with the raw amino-acid sequence, 63 residues long: Megourin-1 (63 aa).

As to quaternary structure, monomer. Contains four disulfide bonds.

The protein localises to the secreted. In terms of biological role, has antimicrobial activity against Gram-positive bacteria and fungi. In Megoura viciae (Vetch aphid), this protein is Megourin-1.